A 348-amino-acid chain; its full sequence is MVRTINETFLKACRGERTDYVPAWYMRQAGRSQPEYRKIKEKYSLFEITHNPELCAYVTKLPVDQYNVDAAILYKDIMSPLPAIGVDVEIKSGIGPVIDNPIRSLQDVEKLGEINPEDDVPYILDTIRLLTTEMLDVPLIGFSGAPFTLASYMIEGGPSRNYHNTKAFMYAEPKAWFALMDKLADMVITYLKAQINAGAKAVQIFDSWVGTVNVADYRVFIKPAMERIFAEVRKMGVPMIMHGVGAAHLVNEWHDLPLDVVGLDWRLPIEEARARGVHKAVQGNMDPSFLLAPWSVIEEHVKGILDQGMKQPGYIFNLGHGVFPEVNPDTLKRLTTFIHEYSKGQLAK.

Residues 27–31, Phe46, Asp76, Tyr152, Ser207, and His320 each bind substrate; that span reads RQAGR.

Belongs to the uroporphyrinogen decarboxylase family. Homodimer.

It localises to the cytoplasm. It catalyses the reaction uroporphyrinogen III + 4 H(+) = coproporphyrinogen III + 4 CO2. The protein operates within porphyrin-containing compound metabolism; protoporphyrin-IX biosynthesis; coproporphyrinogen-III from 5-aminolevulinate: step 4/4. Catalyzes the decarboxylation of four acetate groups of uroporphyrinogen-III to yield coproporphyrinogen-III. The chain is Uroporphyrinogen decarboxylase from Bacillus cereus (strain B4264).